The primary structure comprises 373 residues: Erythronate-4-phosphate dehydrogenase (373 aa).

Substrate contacts are provided by Ser45 and Thr66. Asp146 and Thr175 together coordinate NAD(+). Arg208 is an active-site residue. Asp232 contributes to the NAD(+) binding site. Glu237 is an active-site residue. The active-site Proton donor is the His254. NAD(+) is bound at residue Gly257. Tyr258 contacts substrate.

This sequence belongs to the D-isomer specific 2-hydroxyacid dehydrogenase family. PdxB subfamily. In terms of assembly, homodimer.

Its subcellular location is the cytoplasm. The catalysed reaction is 4-phospho-D-erythronate + NAD(+) = (R)-3-hydroxy-2-oxo-4-phosphooxybutanoate + NADH + H(+). Its pathway is cofactor biosynthesis; pyridoxine 5'-phosphate biosynthesis; pyridoxine 5'-phosphate from D-erythrose 4-phosphate: step 2/5. In terms of biological role, catalyzes the oxidation of erythronate-4-phosphate to 3-hydroxy-2-oxo-4-phosphonooxybutanoate. This Serratia proteamaculans (strain 568) protein is Erythronate-4-phosphate dehydrogenase.